The chain runs to 773 residues: Mitochondrial 15S rRNA processing factor CCM1 (773 aa).

The transit peptide at 1–23 (MLRARLLVPLVRPALVHRLDRCY) directs the protein to the mitochondrion. The segment covering 89–106 (AAEATEQHKELPPAEQER) has biased composition (basic and acidic residues). Residues 89–122 (AAEATEQHKELPPAEQERPSGANTHTAPIKHDTK) are disordered. PPR repeat units follow at residues 220–254 (SAITYGQVMLGYAEDGNVEKVEERFRQMIDNNITP), 255–285 (TVHTYAHRLKACDKRGDLKQAMEIFDDLKLA), 294–328 (NQVIFTTLISTSLRNHKVELASQIFEYMKYASLET), 331–365 (TAHTYNSLITASAIRSNTERALDLFEEMKQKSVAN), and 366–400 (VRTYQSLILACLRQEKYHLKAWELLLELREQHSES).

Belongs to the CCM1 family. Binds to mitochondrial small subunit 15S rRNA.

The protein localises to the mitochondrion. Its function is as follows. Regulates mitochondrial small subunit maturation by controlling 15S rRNA 5'-end processing. Localizes to the 5' precursor of the 15S rRNA in a position that is subsequently occupied by mS47 in the mature yeast mtSSU. Uses structure and sequence-specific RNA recognition, binding to a single-stranded region of the precursor and specifically recognizing bases -6 to -1. The exchange of Ccm1 for mS47 is coupled to the irreversible removal of precursor rRNA that is accompanied by conformational changes of the mitoribosomal proteins uS5m and mS26. These conformational changes signal completion of 5'-end rRNA processing through protection of the mature 5'-end of the 15S rRNA and stabilization of mS47. The removal of the 5' precursor together with the dissociation of Ccm1 may be catalyzed by the 5'-3' exoribonuclease Pet127. Involved in the specific removal of group I introns in mitochondrial encoded transcripts. In Yarrowia lipolytica (strain CLIB 122 / E 150) (Yeast), this protein is Mitochondrial 15S rRNA processing factor CCM1 (CCM1).